We begin with the raw amino-acid sequence, 597 residues long: Elongation factor 4 (597 aa).

The tr-type G domain occupies 2–184 (QHIRNFSIIA…AVISRIPPPK (183 aa)). GTP is bound by residues 14–19 (DHGKST) and 131–134 (NKID).

Belongs to the TRAFAC class translation factor GTPase superfamily. Classic translation factor GTPase family. LepA subfamily.

Its subcellular location is the cell inner membrane. It carries out the reaction GTP + H2O = GDP + phosphate + H(+). Required for accurate and efficient protein synthesis under certain stress conditions. May act as a fidelity factor of the translation reaction, by catalyzing a one-codon backward translocation of tRNAs on improperly translocated ribosomes. Back-translocation proceeds from a post-translocation (POST) complex to a pre-translocation (PRE) complex, thus giving elongation factor G a second chance to translocate the tRNAs correctly. Binds to ribosomes in a GTP-dependent manner. This chain is Elongation factor 4, found in Nitrosospira multiformis (strain ATCC 25196 / NCIMB 11849 / C 71).